The following is a 757-amino-acid chain: Centrosomal protein of 68 kDa (757 aa).

Composition is skewed to basic and acidic residues over residues 1–17 (MALG…EDTK) and 86–96 (ANREPVAERSE). Disordered regions lie at residues 1-47 (MALG…RLEA), 67-158 (WIGT…PSLA), 192-259 (QPSS…GGDA), 311-480 (PGPQ…ESDD), 509-551 (PTGD…SGDP), and 597-618 (LDRW…GGEQ). Over residues 125–144 (LSSSEEFPQTLSLPRTTTIC) the composition is skewed to polar residues. Low complexity-rich tracts occupy residues 192 to 206 (QPSS…TGSS) and 224 to 240 (VSSS…SSVV). At serine 332 the chain carries Phosphoserine; by PLK1. Positions 339–355 (FSVSPASTLKSPTNVSP) are enriched in polar residues. Basic and acidic residues-rich tracts occupy residues 405-432 (GSRD…KHLD) and 439-456 (RTRD…EKRT). The span at 457–467 (SQSARRPTCTE) shows a compositional bias: polar residues. 2 positions are modified to phosphoserine: serine 472 and serine 478. Residues 524–543 (SDGPASFPSSSSQSQLPPGA) are compositionally biased toward low complexity.

As to quaternary structure, interacts with CNTLN; the interaction recruits CEP68 to the centrosome. Interacts with the SCF(FBXW11) complex which contains SKP1, CUL1 and FBXW11; the interaction is probably mediated by FBXW11 and the complex also contains CDK5RAP2 and PCNT. Also interacts with F-box protein BTRC. Interacts with serine/threonine-protein kinase PLK1; the interaction leads to phosphorylation of CEP68 and its subsequent degradation. Interacts with NEK2; the interaction leads to phosphorylation of CEP68. Post-translationally, phosphorylation by PLK1 is required for binding to BTRC in prometaphase. Phosphorylated directly or indirectly by NEK2. NEK2-mediated phosphorylation promotes CEP68 dissociation from the centrosome and its degradation at the onset of mitosis. Ubiquitinated and targeted for proteasomal degradation in early mitosis by the SCF(BTRC) and/or SCF(FBXW11) E3 ubiquitin-protein ligase complexes. Degradation is complete by prometaphase and is required for removal of CDK5RAP2 from the peripheral pericentriolar material and subsequent centriole separation.

It is found in the cytoplasm. It localises to the cytoskeleton. Its subcellular location is the microtubule organizing center. The protein resides in the centrosome. In terms of biological role, involved in maintenance of centrosome cohesion, probably as part of a linker structure which prevents centrosome splitting. Required for localization of CDK5RAP2 to the centrosome during interphase. Contributes to CROCC/rootletin filament formation. This Homo sapiens (Human) protein is Centrosomal protein of 68 kDa (CEP68).